A 318-amino-acid polypeptide reads, in one-letter code: MANTLEQLKSYTTIVADTGDIEAIKRYQPEDATTNPSLILKAAQIPEYSALIDNAIAWAKLQSADIEQQIDDASDKLAVNIGVEILKLVPGRISTEVDARLSFDKEKSIAKAHKLVRLYQEAGVDKSRILIKLASTWEGICAAKELEQEGINCNLTLLFSFAQARACAEAGVYLISPFVGRILDWYKKDTGKDYDAVNDPGVVSVTEIYNYYKQHGYNTVVMGASFRNIGEIIELAGCDRLTIGPSLLEELANSQVAIQPKLIPASTTVAAGEPLTEAQFRWDFNQDPMAVDKLAEGIRNFAIDQGKLEVMLKAKLAN.

The Schiff-base intermediate with substrate role is filled by K132.

This sequence belongs to the transaldolase family. Type 1 subfamily. As to quaternary structure, homodimer.

It is found in the cytoplasm. It catalyses the reaction D-sedoheptulose 7-phosphate + D-glyceraldehyde 3-phosphate = D-erythrose 4-phosphate + beta-D-fructose 6-phosphate. It functions in the pathway carbohydrate degradation; pentose phosphate pathway; D-glyceraldehyde 3-phosphate and beta-D-fructose 6-phosphate from D-ribose 5-phosphate and D-xylulose 5-phosphate (non-oxidative stage): step 2/3. Functionally, transaldolase is important for the balance of metabolites in the pentose-phosphate pathway. This chain is Transaldolase, found in Shewanella sp. (strain MR-7).